A 127-amino-acid polypeptide reads, in one-letter code: Aspartate 1-decarboxylase (127 aa).

The active-site Schiff-base intermediate with substrate; via pyruvic acid is the serine 25. Serine 25 carries the pyruvic acid (Ser) modification. Position 57 (threonine 57) interacts with substrate. The Proton donor role is filled by tyrosine 58. 73–75 serves as a coordination point for substrate; that stretch reads GAA.

This sequence belongs to the PanD family. As to quaternary structure, heterooctamer of four alpha and four beta subunits. Pyruvate serves as cofactor. Post-translationally, is synthesized initially as an inactive proenzyme, which is activated by self-cleavage at a specific serine bond to produce a beta-subunit with a hydroxyl group at its C-terminus and an alpha-subunit with a pyruvoyl group at its N-terminus.

Its subcellular location is the cytoplasm. The enzyme catalyses L-aspartate + H(+) = beta-alanine + CO2. Its pathway is cofactor biosynthesis; (R)-pantothenate biosynthesis; beta-alanine from L-aspartate: step 1/1. Functionally, catalyzes the pyruvoyl-dependent decarboxylation of aspartate to produce beta-alanine. In Carboxydothermus hydrogenoformans (strain ATCC BAA-161 / DSM 6008 / Z-2901), this protein is Aspartate 1-decarboxylase.